Here is a 91-residue protein sequence, read N- to C-terminus: Cell division protein ZapA (91 aa).

Residues 58 to 91 (LTAVNIASEYLKLKEEYNRLREQLKKEKDGERDD) are a coiled coil.

This sequence belongs to the ZapA family. Type 2 subfamily. As to quaternary structure, homodimer. Interacts with FtsZ.

It is found in the cytoplasm. In terms of biological role, activator of cell division through the inhibition of FtsZ GTPase activity, therefore promoting FtsZ assembly into bundles of protofilaments necessary for the formation of the division Z ring. It is recruited early at mid-cell but it is not essential for cell division. This Geobacillus kaustophilus (strain HTA426) protein is Cell division protein ZapA.